Consider the following 397-residue polypeptide: Probable pyruvate dehydrogenase E1 component subunit alpha, mitochondrial (397 aa).

The pyruvate site is built by His86, Tyr112, Arg113, Gly159, Val161, Asp190, Gly191, Ala192, and Asn219. Residues Tyr112, Arg113, Gly159, Val161, Asp190, Gly191, Ala192, Asn219, and His286 each coordinate thiamine diphosphate. Residue Asp190 coordinates Mg(2+). Asn219 is a binding site for Mg(2+).

Tetramer of 2 alpha and 2 beta subunits. Requires thiamine diphosphate as cofactor. Mg(2+) is required as a cofactor.

The protein localises to the mitochondrion matrix. It catalyses the reaction N(6)-[(R)-lipoyl]-L-lysyl-[protein] + pyruvate + H(+) = N(6)-[(R)-S(8)-acetyldihydrolipoyl]-L-lysyl-[protein] + CO2. Its activity is regulated as follows. E1 activity is regulated by phosphorylation (inactivation) and dephosphorylation (activation) of the alpha subunit. Functionally, the pyruvate dehydrogenase complex catalyzes the overall conversion of pyruvate to acetyl-CoA and CO(2). It contains multiple copies of three enzymatic components: pyruvate dehydrogenase (E1), dihydrolipoamide acetyltransferase (E2) and lipoamide dehydrogenase (E3). The protein is Probable pyruvate dehydrogenase E1 component subunit alpha, mitochondrial of Caenorhabditis elegans.